Here is a 266-residue protein sequence, read N- to C-terminus: Putative carbamate hydrolase RutD (266 aa).

An AB hydrolase-1 domain is found at 14 to 116 (PVVVLISGLG…VLVSVNGWLR (103 aa)).

It belongs to the AB hydrolase superfamily. Hydrolase RutD family.

The enzyme catalyses carbamate + 2 H(+) = NH4(+) + CO2. Functionally, involved in pyrimidine catabolism. May facilitate the hydrolysis of carbamate, a reaction that can also occur spontaneously. The chain is Putative carbamate hydrolase RutD from Escherichia coli O81 (strain ED1a).